The chain runs to 295 residues: N-acetylmuramic acid 6-phosphate etherase (295 aa).

Positions 53–216 (TTEQFKQGGR…STITMVGVGK (164 aa)) constitute an SIS domain. Glu81 functions as the Proton donor in the catalytic mechanism. Glu112 is an active-site residue.

Belongs to the GCKR-like family. MurNAc-6-P etherase subfamily. As to quaternary structure, homodimer.

It catalyses the reaction N-acetyl-D-muramate 6-phosphate + H2O = N-acetyl-D-glucosamine 6-phosphate + (R)-lactate. Its pathway is amino-sugar metabolism; N-acetylmuramate degradation. Its function is as follows. Specifically catalyzes the cleavage of the D-lactyl ether substituent of MurNAc 6-phosphate, producing GlcNAc 6-phosphate and D-lactate. This chain is N-acetylmuramic acid 6-phosphate etherase, found in Staphylococcus saprophyticus subsp. saprophyticus (strain ATCC 15305 / DSM 20229 / NCIMB 8711 / NCTC 7292 / S-41).